The primary structure comprises 851 residues: Receptor like protein kinase S.2 (851 aa).

One can recognise a Protein kinase 1 domain in the interval 117 to 436 (FSDELILGSG…LPSFKSHPLY (320 aa)). ATP-binding positions include 123–131 (LGSGGFGRV) and lysine 146. The active-site Proton acceptor is aspartate 248. The segment at 448–471 (SATTTTTRTTMTTTTSTTSFNASS) is disordered. In terms of domain architecture, Protein kinase 2 spans 532–819 (FSDARRVAEV…SILDGSERFF (288 aa)). ATP-binding positions include 538 to 546 (VAEVDFGTA) and lysine 560.

This sequence belongs to the protein kinase superfamily. Ser/Thr protein kinase family.

The enzyme catalyses L-seryl-[protein] + ATP = O-phospho-L-seryl-[protein] + ADP + H(+). It carries out the reaction L-threonyl-[protein] + ATP = O-phospho-L-threonyl-[protein] + ADP + H(+). The sequence is that of Receptor like protein kinase S.2 (LECRKS2) from Arabidopsis thaliana (Mouse-ear cress).